A 498-amino-acid chain; its full sequence is Early growth response protein 1 (498 aa).

Disordered stretches follow at residues 137–203 and 287–308; these read NASP…TASI and PSRM…RPYA. Over residues 139–163 the composition is skewed to low complexity; it reads SPSSAPSSSPSSSSSSSQSPPLSCS. Residues 179–202 show a composition bias toward polar residues; it reads FPNSSPELFPDQSPQPFQNASTAS. 3 consecutive C2H2-type zinc fingers follow at residues 307-331, 337-359, and 365-387; these read YACP…IRIH, FQCR…IRTH, and FACD…TKIH. Residues 378–422 are disordered; sequence DERKRHTKIHLRQKDKKADKATPVSVASPVSSYSPSASTSYPSPV. The segment covering 382–392 has biased composition (basic residues); the sequence is RHTKIHLRQKD. The span at 398 to 422 shows a compositional bias: low complexity; sequence ATPVSVASPVSSYSPSASTSYPSPV.

This sequence belongs to the EGR C2H2-type zinc-finger protein family.

It is found in the nucleus. It localises to the cytoplasm. Transcriptional regulator. Recognizes and binds to the DNA sequence 5'-GCG(T/G)GGGCG-3'(EGR-site) in the promoter region of target genes. Binds double-stranded target DNA, irrespective of the cytosine methylation status. Regulates the transcription of numerous target genes, and thereby plays an important role in regulating the response to growth factors, DNA damage, and ischemia. Plays a role in the regulation of cell survival, proliferation and cell death. Mediates responses to ischemia and hypoxia; regulates the expression of proteins that are involved in inflammatory processes. Plays a role in regulating the expression of circadian clock genes. The protein is Early growth response protein 1 of Xenopus tropicalis (Western clawed frog).